The primary structure comprises 556 residues: Arginine--tRNA ligase 1 (556 aa).

The 'HIGH' region signature appears at Ala132–His142.

Belongs to the class-I aminoacyl-tRNA synthetase family. Monomer.

The protein resides in the cytoplasm. The catalysed reaction is tRNA(Arg) + L-arginine + ATP = L-arginyl-tRNA(Arg) + AMP + diphosphate. The chain is Arginine--tRNA ligase 1 (argS1) from Halalkalibacterium halodurans (strain ATCC BAA-125 / DSM 18197 / FERM 7344 / JCM 9153 / C-125) (Bacillus halodurans).